A 60-amino-acid chain; its full sequence is Large ribosomal subunit protein uL30 (60 aa).

Belongs to the universal ribosomal protein uL30 family. In terms of assembly, part of the 50S ribosomal subunit.

The polypeptide is Large ribosomal subunit protein uL30 (Alcanivorax borkumensis (strain ATCC 700651 / DSM 11573 / NCIMB 13689 / SK2)).